The following is a 346-amino-acid chain: N-acetyl-gamma-glutamyl-phosphate reductase (346 aa).

Residue Cys150 is part of the active site.

Belongs to the NAGSA dehydrogenase family. Type 1 subfamily.

It localises to the cytoplasm. It carries out the reaction N-acetyl-L-glutamate 5-semialdehyde + phosphate + NADP(+) = N-acetyl-L-glutamyl 5-phosphate + NADPH + H(+). It functions in the pathway amino-acid biosynthesis; L-arginine biosynthesis; N(2)-acetyl-L-ornithine from L-glutamate: step 3/4. Functionally, catalyzes the NADPH-dependent reduction of N-acetyl-5-glutamyl phosphate to yield N-acetyl-L-glutamate 5-semialdehyde. This Lachnoclostridium phytofermentans (strain ATCC 700394 / DSM 18823 / ISDg) (Clostridium phytofermentans) protein is N-acetyl-gamma-glutamyl-phosphate reductase.